We begin with the raw amino-acid sequence, 350 residues long: Methionine import ATP-binding protein MetN (350 aa).

One can recognise an ABC transporter domain in the interval 2-241 (IQIKNLKKEY…PQAPVTRSFV (240 aa)). ATP is bound at residue 38–45 (GHSGAGKS).

This sequence belongs to the ABC transporter superfamily. Methionine importer (TC 3.A.1.24) family. As to quaternary structure, the complex is composed of two ATP-binding proteins (MetN), two transmembrane proteins (MetI) and a solute-binding protein (MetQ).

The protein resides in the cell inner membrane. It catalyses the reaction L-methionine(out) + ATP + H2O = L-methionine(in) + ADP + phosphate + H(+). The catalysed reaction is D-methionine(out) + ATP + H2O = D-methionine(in) + ADP + phosphate + H(+). Its function is as follows. Part of the ABC transporter complex MetNIQ involved in methionine import. Responsible for energy coupling to the transport system. This chain is Methionine import ATP-binding protein MetN, found in Francisella tularensis subsp. tularensis (strain FSC 198).